Reading from the N-terminus, the 329-residue chain is DNA-directed RNA polymerase subunit alpha (329 aa).

The interval 1-235 (MQGSVTEFLK…EQLDAFVDLR (235 aa)) is alpha N-terminal domain (alpha-NTD). The alpha C-terminal domain (alpha-CTD) stretch occupies residues 249 to 329 (FDPILLRPVD…NWPPASIAED (81 aa)).

The protein belongs to the RNA polymerase alpha chain family. Homodimer. The RNAP catalytic core consists of 2 alpha, 1 beta, 1 beta' and 1 omega subunit. When a sigma factor is associated with the core the holoenzyme is formed, which can initiate transcription.

It catalyses the reaction RNA(n) + a ribonucleoside 5'-triphosphate = RNA(n+1) + diphosphate. Its function is as follows. DNA-dependent RNA polymerase catalyzes the transcription of DNA into RNA using the four ribonucleoside triphosphates as substrates. The sequence is that of DNA-directed RNA polymerase subunit alpha from Pasteurella multocida (strain Pm70).